We begin with the raw amino-acid sequence, 299 residues long: Aspartate carbamoyltransferase catalytic subunit (299 aa).

Residues Arg-54 and Thr-55 each contribute to the carbamoyl phosphate site. Lys-83 contributes to the L-aspartate binding site. Carbamoyl phosphate-binding residues include Arg-104, His-132, and Gln-135. Positions 165 and 222 each coordinate L-aspartate. Carbamoyl phosphate is bound by residues Leu-261 and Pro-262.

Belongs to the aspartate/ornithine carbamoyltransferase superfamily. ATCase family. In terms of assembly, heterooligomer of catalytic and regulatory chains.

The catalysed reaction is carbamoyl phosphate + L-aspartate = N-carbamoyl-L-aspartate + phosphate + H(+). Its pathway is pyrimidine metabolism; UMP biosynthesis via de novo pathway; (S)-dihydroorotate from bicarbonate: step 2/3. Functionally, catalyzes the condensation of carbamoyl phosphate and aspartate to form carbamoyl aspartate and inorganic phosphate, the committed step in the de novo pyrimidine nucleotide biosynthesis pathway. This is Aspartate carbamoyltransferase catalytic subunit from Archaeoglobus fulgidus (strain ATCC 49558 / DSM 4304 / JCM 9628 / NBRC 100126 / VC-16).